We begin with the raw amino-acid sequence, 291 residues long: 33 kDa chaperonin (291 aa).

2 cysteine pairs are disulfide-bonded: C237–C239 and C270–C273.

The protein belongs to the HSP33 family. Under oxidizing conditions two disulfide bonds are formed involving the reactive cysteines. Under reducing conditions zinc is bound to the reactive cysteines and the protein is inactive.

It localises to the cytoplasm. In terms of biological role, redox regulated molecular chaperone. Protects both thermally unfolding and oxidatively damaged proteins from irreversible aggregation. Plays an important role in the bacterial defense system toward oxidative stress. The sequence is that of 33 kDa chaperonin from Clostridioides difficile (strain 630) (Peptoclostridium difficile).